The primary structure comprises 391 residues: Elongation factor Tu (391 aa).

The tr-type G domain occupies 10 to 201 (KPHVNIGTIG…AVDDYIPTPE (192 aa)). A G1 region spans residues 19–26 (GHVDHGKT). 19–26 (GHVDHGKT) is a GTP binding site. A Mg(2+)-binding site is contributed by Thr26. The tract at residues 55 to 59 (GITIS) is G2. The tract at residues 76 to 79 (DCPG) is G3. GTP contacts are provided by residues 76 to 80 (DCPGH) and 131 to 134 (NKCD). The segment at 131–134 (NKCD) is G4. A G5 region spans residues 169–171 (SAL).

The protein belongs to the TRAFAC class translation factor GTPase superfamily. Classic translation factor GTPase family. EF-Tu/EF-1A subfamily. In terms of assembly, monomer.

The protein localises to the cytoplasm. The catalysed reaction is GTP + H2O = GDP + phosphate + H(+). In terms of biological role, GTP hydrolase that promotes the GTP-dependent binding of aminoacyl-tRNA to the A-site of ribosomes during protein biosynthesis. This Brucella anthropi (strain ATCC 49188 / DSM 6882 / CCUG 24695 / JCM 21032 / LMG 3331 / NBRC 15819 / NCTC 12168 / Alc 37) (Ochrobactrum anthropi) protein is Elongation factor Tu.